We begin with the raw amino-acid sequence, 517 residues long: Sterol 14-alpha demethylase CYP51C (517 aa).

A helical membrane pass occupies residues 10–30; that stretch reads TLPLSVSIPLTTSIIIILSIV. Residue Tyr-115 coordinates lanosterol. Gly-300 serves as a coordination point for itraconazole. Cys-458 contacts heme.

The protein belongs to the cytochrome P450 family. It depends on heme as a cofactor.

The protein resides in the endoplasmic reticulum membrane. It functions in the pathway steroid metabolism; ergosterol biosynthesis. Functionally, together with cyp51A and cyp51B, encodes the sterol 14alpha-demethylase that plays a critical role in the third module of ergosterol biosynthesis pathway, being ergosterol the major sterol component in fungal membranes that participates in a variety of functions. Cyp51C does not seem to encode an active sterol 14-alpha-demethylase, but can impact indirectly on sterol 14alpha-demethylation, and is required for full virulence on host wheat ears, but not on Arabidopsis floral tissue or the fruits of apple and tomato. The third module or late pathway involves the ergosterol synthesis itself through consecutive reactions that mainly occur in the endoplasmic reticulum (ER) membrane. In filamentous fungi, during the initial step of this module, lanosterol (lanosta-8,24-dien-3beta-ol) can be metabolized to eburicol. Sterol 14alpha-demethylase catalyzes the three-step oxidative removal of the 14alpha-methyl group (C-32) of both these sterols in the form of formate, and converts eburicol and lanosterol to 14-demethyleburicol (4,4,24-trimethylergosta-8,14,24(28)-trienol) and 4,4-dimethyl-5alpha-cholesta-8,14,24-trien-3beta-ol, respectively, which are further metabolized by other enzymes in the pathway to ergosterol. In Gibberella zeae (strain ATCC MYA-4620 / CBS 123657 / FGSC 9075 / NRRL 31084 / PH-1) (Wheat head blight fungus), this protein is Sterol 14-alpha demethylase CYP51C.